Here is a 227-residue protein sequence, read N- to C-terminus: Large ribosomal subunit protein bL25 (227 aa).

The tract at residues 199–227 (AIAEAQSAEAAEEKAEESAEDEKKDGEEA) is disordered. Positions 209–227 (AEEKAEESAEDEKKDGEEA) are enriched in basic and acidic residues.

It belongs to the bacterial ribosomal protein bL25 family. CTC subfamily. In terms of assembly, part of the 50S ribosomal subunit; part of the 5S rRNA/L5/L18/L25 subcomplex. Contacts the 5S rRNA. Binds to the 5S rRNA independently of L5 and L18.

Functionally, this is one of the proteins that binds to the 5S RNA in the ribosome where it forms part of the central protuberance. This Methylobacterium radiotolerans (strain ATCC 27329 / DSM 1819 / JCM 2831 / NBRC 15690 / NCIMB 10815 / 0-1) protein is Large ribosomal subunit protein bL25.